A 250-amino-acid polypeptide reads, in one-letter code: Bis(5'-nucleosyl)-tetraphosphatase PrpE [asymmetrical] (250 aa).

This sequence belongs to the PrpE family. It depends on Ni(2+) as a cofactor.

It carries out the reaction P(1),P(4)-bis(5'-guanosyl) tetraphosphate + H2O = GMP + GTP + 2 H(+). Its function is as follows. Asymmetrically hydrolyzes Ap4p to yield AMP and ATP. The sequence is that of Bis(5'-nucleosyl)-tetraphosphatase PrpE [asymmetrical] from Oceanobacillus iheyensis (strain DSM 14371 / CIP 107618 / JCM 11309 / KCTC 3954 / HTE831).